A 272-amino-acid polypeptide reads, in one-letter code: S-adenosylmethionine decarboxylase proenzyme (272 aa).

S122 (schiff-base intermediate with substrate; via pyruvic acid) is an active-site residue. Position 122 is a pyruvic acid (Ser); by autocatalysis (S122). H127 (proton acceptor; for processing activity) is an active-site residue. Catalysis depends on C150, which acts as the Proton donor; for catalytic activity.

This sequence belongs to the prokaryotic AdoMetDC family. Type 2 subfamily. In terms of assembly, heterooctamer of four alpha and four beta chains arranged as a tetramer of alpha/beta heterodimers. The cofactor is pyruvate. Is synthesized initially as an inactive proenzyme. Formation of the active enzyme involves a self-maturation process in which the active site pyruvoyl group is generated from an internal serine residue via an autocatalytic post-translational modification. Two non-identical subunits are generated from the proenzyme in this reaction, and the pyruvate is formed at the N-terminus of the alpha chain, which is derived from the carboxyl end of the proenzyme. The post-translation cleavage follows an unusual pathway, termed non-hydrolytic serinolysis, in which the side chain hydroxyl group of the serine supplies its oxygen atom to form the C-terminus of the beta chain, while the remainder of the serine residue undergoes an oxidative deamination to produce ammonia and the pyruvoyl group blocking the N-terminus of the alpha chain.

It carries out the reaction S-adenosyl-L-methionine + H(+) = S-adenosyl 3-(methylsulfanyl)propylamine + CO2. Its pathway is amine and polyamine biosynthesis; S-adenosylmethioninamine biosynthesis; S-adenosylmethioninamine from S-adenosyl-L-methionine: step 1/1. Catalyzes the decarboxylation of S-adenosylmethionine to S-adenosylmethioninamine (dcAdoMet), the propylamine donor required for the synthesis of the polyamines spermine and spermidine from the diamine putrescine. This Clostridium botulinum (strain Alaska E43 / Type E3) protein is S-adenosylmethionine decarboxylase proenzyme.